Reading from the N-terminus, the 355-residue chain is Tyrosine recombinase XerC (355 aa).

The region spanning 4–89 (TQFDGDIDSF…AVRGFFAWAY (86 aa)) is the Core-binding (CB) domain. Residues 137 to 181 (KDDGGAAAAPGSGKAAGKTADKSADTVNRSEAPARADKRDNARVT) form a disordered region. Over residues 141–154 (GAAAAPGSGKAAGK) the composition is skewed to low complexity. Positions 158 to 349 (KSADTVNRSE…SIEQLKNRYG (192 aa)) constitute a Tyr recombinase domain. The span at 168–178 (APARADKRDNA) shows a compositional bias: basic and acidic residues. Residues R200, K224, H301, R304, and H327 contribute to the active site. The active-site O-(3'-phospho-DNA)-tyrosine intermediate is the Y336.

It belongs to the 'phage' integrase family. XerC subfamily. In terms of assembly, forms a cyclic heterotetrameric complex composed of two molecules of XerC and two molecules of XerD.

It is found in the cytoplasm. Site-specific tyrosine recombinase, which acts by catalyzing the cutting and rejoining of the recombining DNA molecules. The XerC-XerD complex is essential to convert dimers of the bacterial chromosome into monomers to permit their segregation at cell division. It also contributes to the segregational stability of plasmids. The polypeptide is Tyrosine recombinase XerC (Bifidobacterium longum (strain DJO10A)).